The following is a 541-amino-acid chain: Ankyrin repeat domain-containing protein 13C (541 aa).

The span at 1–20 (MTGEKIRSLRRDHKPSKEEG) shows a compositional bias: basic and acidic residues. The segment at 1–27 (MTGEKIRSLRRDHKPSKEEGDLLEPGD) is disordered. 3 ANK repeats span residues 111–142 (PAHY…QKDN), 143–172 (HGNT…PVKV), and 176–205 (QGWS…QQSR). At S411 the chain carries Phosphoserine.

It localises to the endoplasmic reticulum membrane. Functionally, acts as a molecular chaperone for G protein-coupled receptors, regulating their biogenesis and exit from the ER. In Homo sapiens (Human), this protein is Ankyrin repeat domain-containing protein 13C (ANKRD13C).